A 720-amino-acid polypeptide reads, in one-letter code: Cyclopenase penL (720 aa).

Cu cation is bound by residues histidine 137, histidine 141, and histidine 313.

It belongs to the tyrosinase family. The cofactor is Cu(2+).

The enzyme catalyses (-)-cyclopenine = viridicatin + methyl isocyanate + H(+). It catalyses the reaction (-)-4'-methoxycyclopenine = 4'-methoxyviridicatin + methyl isocyanate + H(+). It participates in secondary metabolite biosynthesis. The protein operates within alkaloid biosynthesis. It functions in the pathway mycotoxin biosynthesis. Functionally, cyclopenase; part of the gene cluster that mediates the biosynthesis of penigequinolones, potent insecticidal alkaloids that contain a highly modified 10-carbon prenyl group. The first stage is catalyzed by the nonribosomal peptide synthetase penN that condenses anthranilic acid and O-methyl-L-tyrosine to produce 4'-methoxycyclopeptin. 4'-methoxycyclopeptin is then converted to 4'-methoxydehydrocyclopeptin by the ketoglutarate-dependent dioxygenase penM through dehydrogenation to form a double bond between C-alpha and C-beta of the O-methyltyrosine side chain. PenM also converts its first product methoxydehydrocyclopeptin to 4'-methoxycyclopenin. The following conversion of 4'methoxycyclopenin into 4'-methoxyviridicatin is catalyzed by the cyclopenase penL. 4'-methoxyviridicatin is the precursor of quinolone natural products, and is further converted to quinolinone B. The prenyltransferase penI then catalyzes the canonical Friedel-Crafts alkylation of quinolinone B with dimethylallyl cation to yield dimethylallyl quinolone, which is subjected to FAD-dependent dehydrogenation by the FAD-linked oxidoreductase penH to yield conjugated aryl diene. The delta(3') double bond then serves as the site of the second alkylation with DMAPP catalyzed by the prenyltransferase penG to yield a carbenium ion intermediate, which can be attacked by H(2)O to yield a styrenyl quinolone containing a C3'-hydroxyprenyl chain, or undergo cyclization to yield yaequinolones J1 and J2. The conversion of the styrenyl quinolone into the tetrahydrofuran-containing yaequinolone C is performed by the FAD-dependent monooxygenase penE and involves epoxidation of the terminal C7'-C8' olefin, followed by epoxide ring opening initiated by the C3' hydroxyl group. The predicted cysteine hydrolase penJ acts as an epoxide hydrolase that enhances the rate of the 5-exo-tet cyclization step, increasing the yield of yaequinolone C. PenF catalyzes the cationic rearrangement of the epoxide formed by penE (before ring opening to produce yaequinolone C) into yaequinolone D. Finally, the short-chain dehydrogenase/reductase (SDR)-like reductase penD, catalyzes both the dehydration of yaequinolone D and the reduction of the resulting oxonium to yield penigequinolone. In Penicillium thymicola, this protein is Cyclopenase penL.